Here is a 306-residue protein sequence, read N- to C-terminus: Pantothenate kinase (306 aa).

91 to 98 (GSVAVGKS) contacts ATP.

This sequence belongs to the prokaryotic pantothenate kinase family.

It localises to the cytoplasm. The enzyme catalyses (R)-pantothenate + ATP = (R)-4'-phosphopantothenate + ADP + H(+). It participates in cofactor biosynthesis; coenzyme A biosynthesis; CoA from (R)-pantothenate: step 1/5. This chain is Pantothenate kinase, found in Streptococcus gordonii (strain Challis / ATCC 35105 / BCRC 15272 / CH1 / DL1 / V288).